A 276-amino-acid polypeptide reads, in one-letter code: Large ribosomal subunit protein uL2 (276 aa).

A disordered region spans residues Asn212–Lys276. Over residues Tyr257–Lys276 the composition is skewed to basic residues.

It belongs to the universal ribosomal protein uL2 family. In terms of assembly, part of the 50S ribosomal subunit. Forms a bridge to the 30S subunit in the 70S ribosome.

Its function is as follows. One of the primary rRNA binding proteins. Required for association of the 30S and 50S subunits to form the 70S ribosome, for tRNA binding and peptide bond formation. It has been suggested to have peptidyltransferase activity; this is somewhat controversial. Makes several contacts with the 16S rRNA in the 70S ribosome. The chain is Large ribosomal subunit protein uL2 from Helicobacter pylori (strain P12).